We begin with the raw amino-acid sequence, 471 residues long: Ammonium transporter Rh type B (471 aa).

The Cytoplasmic portion of the chain corresponds to 1–13 (MAGSPSRAAGRRL). A helical transmembrane segment spans residues 14-33 (QLPLLSFLQGATAVLFAVFV). The Extracellular portion of the chain corresponds to 34–60 (RYNHKTDAALWHRGNHSNADNEFYFRY). An N-linked (GlcNAc...) asparagine glycan is attached at asparagine 48. Residues 61–81 (PSFQDVHAMVFVGFGFLMVFL) form a helical membrane-spanning segment. Topologically, residues 82-85 (QRYG) are cytoplasmic. A helical membrane pass occupies residues 86–106 (FSSVGFTFLLAAFALQWSTLV). The Extracellular portion of the chain corresponds to 107–123 (QGFLHSFHGGHIHVGVE). Residues 124–144 (SMINADFCAGAVLISFGAVLG) traverse the membrane as a helical segment. Residues 145-148 (KTGP) are Cytoplasmic-facing. A helical membrane pass occupies residues 149 to 169 (AQLLLMALLEVVLFGINEFVL). Residues 170–177 (LHLLGVRD) are Extracellular-facing. Residues 178-200 (AGGSMTIHTFGAYFGLVLSQVLY) form a helical membrane-spanning segment. Residues 201-217 (RPQLEKSKHRQGLYHSD) are Cytoplasmic-facing. The chain crosses the membrane as a helical span at residues 218-238 (LFAMIGTIFLWIFWPSFNAAL). Residues 239–249 (TSLGAGQHRTA) lie on the Extracellular side of the membrane. A helical membrane pass occupies residues 250–270 (LNTYYSLAASTLGTFALSALV). The Cytoplasmic segment spans residues 271 to 280 (GEDGRLDMVH). Residues 281–301 (IQNAALAGRVVVGTSSEMMLT) traverse the membrane as a helical segment. A topological domain (extracellular) is located at residue proline 302. The chain crosses the membrane as a helical span at residues 303–323 (FGALAAGFLAGTVSTLGYKFF). Residues 324-344 (TPILESKFKVQDTCGVHNLHG) are Cytoplasmic-facing. A helical membrane pass occupies residues 345–365 (MPGVLGVLLGVLVAGLATHEA). The Extracellular portion of the chain corresponds to 366–391 (YGDGLESVFPLIAEGQRSATSQAMYQ). Residues 392–412 (LFGLFVTLMFASVGGGLGGLL) form a helical membrane-spanning segment. Residues 413–471 (LKLPFLDSPPDSQCYEDQVHWQAPGATLSPLPTPAFQVPGEHEDKAQRPLRVEEADTQA) lie on the Cytoplasmic side of the membrane. The tract at residues 414 to 422 (KLPFLDSPP) is interaction with ANK3. Positions 427 to 430 (YEDQ) match the Basolateral sorting signal motif. Residues 437 to 471 (GATLSPLPTPAFQVPGEHEDKAQRPLRVEEADTQA) form a disordered region. Residues 452–471 (GEHEDKAQRPLRVEEADTQA) are compositionally biased toward basic and acidic residues.

Belongs to the ammonium transporter (TC 2.A.49) family. Rh subfamily. Interacts (via C-terminus) with ANK2 and ANK3; required for targeting to the basolateral membrane. N-glycosylated.

The protein resides in the cell membrane. Its subcellular location is the basolateral cell membrane. It carries out the reaction NH4(+)(in) = NH4(+)(out). It catalyses the reaction methylamine(out) = methylamine(in). The enzyme catalyses CO2(out) = CO2(in). Its function is as follows. Ammonium transporter involved in the maintenance of acid-base homeostasis. Transports ammonium and its related derivative methylammonium across the basolateral plasma membrane of epithelial cells likely contributing to renal transepithelial ammonia transport and ammonia metabolism. May transport either NH4(+) or NH3 ammonia species predominantly mediating an electrogenic NH4(+) transport. May act as a CO2 channel providing for renal acid secretion. The polypeptide is Ammonium transporter Rh type B (RHBG) (Pongo pygmaeus (Bornean orangutan)).